Here is an 840-residue protein sequence, read N- to C-terminus: Translation initiation factor IF-2 (840 aa).

Disordered stretches follow at residues Lys-94–Glu-157 and Pro-169–Pro-256. Residues Arg-95 to Arg-143 are compositionally biased toward basic and acidic residues. Residues Ala-144–Glu-157 show a composition bias toward low complexity. Basic and acidic residues-rich tracts occupy residues Ala-175 to Asp-191 and Ser-223 to Arg-232. The segment covering Arg-233 to Gln-247 has biased composition (basic residues). The region spanning Thr-340 to Lys-509 is the tr-type G domain. The interval Gly-349 to Thr-356 is G1. Gly-349–Thr-356 provides a ligand contact to GTP. Positions Gly-374 to His-378 are G2. The G3 stretch occupies residues Asp-395–Gly-398. Residues Asp-395–His-399 and Asn-449–Asp-452 each bind GTP. Positions Asn-449–Asp-452 are G4. A G5 region spans residues Ser-485–Lys-487.

This sequence belongs to the TRAFAC class translation factor GTPase superfamily. Classic translation factor GTPase family. IF-2 subfamily.

The protein resides in the cytoplasm. In terms of biological role, one of the essential components for the initiation of protein synthesis. Protects formylmethionyl-tRNA from spontaneous hydrolysis and promotes its binding to the 30S ribosomal subunits. Also involved in the hydrolysis of GTP during the formation of the 70S ribosomal complex. This chain is Translation initiation factor IF-2, found in Pseudomonas aeruginosa (strain UCBPP-PA14).